The primary structure comprises 76 residues: Acyl carrier protein (76 aa).

The Carrier domain maps to 1–76 (MALLDDVKAV…DAIKYIENNA (76 aa)). The residue at position 36 (S36) is an O-(pantetheine 4'-phosphoryl)serine.

This sequence belongs to the acyl carrier protein (ACP) family. In terms of processing, 4'-phosphopantetheine is transferred from CoA to a specific serine of apo-ACP by AcpS. This modification is essential for activity because fatty acids are bound in thioester linkage to the sulfhydryl of the prosthetic group.

The protein localises to the cytoplasm. It functions in the pathway lipid metabolism; fatty acid biosynthesis. Carrier of the growing fatty acid chain in fatty acid biosynthesis. In Aliarcobacter butzleri (strain RM4018) (Arcobacter butzleri), this protein is Acyl carrier protein.